Consider the following 374-residue polypeptide: Probable inactive patatin-3-Kuras 1 (374 aa).

An N-terminal signal peptide occupies residues 1-11 (MMLATTSSTFA). Residues 20–217 (LSIDGGGIKG…AAVDPSLLSI (198 aa)) form the PNPLA domain. A GXGXXG motif is present at residues 24 to 29 (GGGIKG). N-linked (GlcNAc...) asparagine glycosylation is found at Asn48 and Asn191. Asp204 functions as the Proton acceptor in the catalytic mechanism. Asn257 is a glycosylation site (N-linked (GlcNAc...) asparagine).

The protein belongs to the patatin family. Post-translationally, N-glycosylated. Tuber.

Its subcellular location is the vacuole. This is Probable inactive patatin-3-Kuras 1 (pat3-k1) from Solanum tuberosum (Potato).